The chain runs to 76 residues: Exodeoxyribonuclease 7 small subunit (76 aa).

Belongs to the XseB family. In terms of assembly, heterooligomer composed of large and small subunits.

It localises to the cytoplasm. The enzyme catalyses Exonucleolytic cleavage in either 5'- to 3'- or 3'- to 5'-direction to yield nucleoside 5'-phosphates.. Bidirectionally degrades single-stranded DNA into large acid-insoluble oligonucleotides, which are then degraded further into small acid-soluble oligonucleotides. The protein is Exodeoxyribonuclease 7 small subunit of Lactiplantibacillus plantarum (strain ATCC BAA-793 / NCIMB 8826 / WCFS1) (Lactobacillus plantarum).